The following is a 136-amino-acid chain: Cyclase aurE (136 aa).

It belongs to the aurE cyclase family.

Its pathway is polyketide biosynthesis. Functionally, cyclase; part of the gene cluster that mediates the biosynthesis of aurovertins, fungal polyketides that exhibit potent inhibition of adenosine triphosphate synthase. Tha biosynthesis starts with the HR-PKS aurA that selects propionate as the starter unit; synthesizes a hexa-ene chain through the repeated functions of the KR and DH domains in the first six iterations; selectively introduces three alpha-methyl substitutions at C4, C6, and C16 using the S-adensylmethionine-dependent cMET; and shuts off KR and DH in the last three iterations to afford a 1,3,5-triketo portion that can undergo intramolecular cyclization to yield the alpha-pyrone intermediate. AurE may act as a cyclase and enhances the rate of pyrone formation and product release of aurA. The methyltransferase aurB then methylates the C17 hydroxyl group. C17 methylation is required to initiate epoxidation by the downstream monooxygenase aurC. The monooxygenase aurC and the epoxide hydrolase aurD can iteratively transform the terminal triene portion of the methylated precursor into the dioxabicyclo[3.2.1]octane scaffold of aurovertin E. Epoxidation modifications of the precursor occur in two separate steps; bis-epoxidation of the two terminal olefins takes place first, followed by another epoxidation that occurs at C7-C8 after tetrahydrofuran formation. The O-acyltransferase aurG converts aurovertin E to aurovertin A. The polypeptide is Cyclase aurE (Calcarisporium arbuscula (Dendryphion arbuscula)).